The primary structure comprises 240 residues: CRISPR system aCascade subunit Cas5 1 (240 aa).

This sequence belongs to the CRISPR-associated protein Cas5 family. Subtype I-A/Apern subfamily. Part of the aCascade ribonucleoprotein complex, minimally composed of Csa2 and Cas5a, which binds crRNA. Other possible components of aCascade in strain P1 are Cas6b (SSO1437) and Csa5 (SSO1443), while SSO1399, Cas5b (SSO1400) and SSO1401 have sometimes been seen weakly associated. Csa2 is probably the major RNA-binding subunit. The Csa2-Cas5a-crRNA complex also binds target DNA homologous to crRNA, probably forming an R-loop. Purified aCascade forms a filament about 6 nm in width.

Its function is as follows. CRISPR (clustered regularly interspaced short palindromic repeat) is an adaptive immune system that provides protection against mobile genetic elements (viruses, transposable elements and conjugative plasmids). CRISPR clusters contain spacers, sequences complementary to antecedent mobile elements, and target invading nucleic acids. CRISPR clusters are transcribed and processed into CRISPR RNA (crRNA). In Saccharolobus solfataricus (strain ATCC 35092 / DSM 1617 / JCM 11322 / P2) (Sulfolobus solfataricus), this protein is CRISPR system aCascade subunit Cas5 1 (cas5a).